The primary structure comprises 547 residues: Chaperonin GroEL (547 aa).

ATP contacts are provided by residues Thr-30–Pro-33, Lys-51, Asp-87–Thr-91, Gly-415, and Asp-495.

It belongs to the chaperonin (HSP60) family. In terms of assembly, forms a cylinder of 14 subunits composed of two heptameric rings stacked back-to-back. Interacts with the co-chaperonin GroES.

The protein localises to the cytoplasm. It catalyses the reaction ATP + H2O + a folded polypeptide = ADP + phosphate + an unfolded polypeptide.. Together with its co-chaperonin GroES, plays an essential role in assisting protein folding. The GroEL-GroES system forms a nano-cage that allows encapsulation of the non-native substrate proteins and provides a physical environment optimized to promote and accelerate protein folding. In Pasteurella multocida (strain Pm70), this protein is Chaperonin GroEL.